A 344-amino-acid polypeptide reads, in one-letter code: N-acetyl-gamma-glutamyl-phosphate reductase (344 aa).

The active site involves C150.

It belongs to the NAGSA dehydrogenase family. Type 1 subfamily.

The protein resides in the cytoplasm. It catalyses the reaction N-acetyl-L-glutamate 5-semialdehyde + phosphate + NADP(+) = N-acetyl-L-glutamyl 5-phosphate + NADPH + H(+). Its pathway is amino-acid biosynthesis; L-arginine biosynthesis; N(2)-acetyl-L-ornithine from L-glutamate: step 3/4. Its function is as follows. Catalyzes the NADPH-dependent reduction of N-acetyl-5-glutamyl phosphate to yield N-acetyl-L-glutamate 5-semialdehyde. This Pseudomonas putida (strain W619) protein is N-acetyl-gamma-glutamyl-phosphate reductase.